Reading from the N-terminus, the 202-residue chain is MSRYRGPRLRVVRRLGELPGLTRKNARRAYAPGQHGQARKKRSEYAIRLEEKQKLRFNYGVSEKQLIRYVRKARRATGSTGQVLLQLLEMRLDNTVFRLGMAGTIPGARQLVNHGHVTVNGRVVDIASYQCRPGDVIGVRNQERSQDLVKRNMEYPGLANLPSHLEFDKNTLVGKVNGVVEREWIALSINELLVVEYYSRKV.

The disordered stretch occupies residues 23-42 (RKNARRAYAPGQHGQARKKR). Residues 90 to 153 (MRLDNTVFRL…RSQDLVKRNM (64 aa)) form the S4 RNA-binding domain.

Belongs to the universal ribosomal protein uS4 family. Part of the 30S ribosomal subunit. Contacts protein S5. The interaction surface between S4 and S5 is involved in control of translational fidelity.

One of the primary rRNA binding proteins, it binds directly to 16S rRNA where it nucleates assembly of the body of the 30S subunit. Functionally, with S5 and S12 plays an important role in translational accuracy. The chain is Small ribosomal subunit protein uS4 from Microcystis aeruginosa (strain NIES-843 / IAM M-2473).